Consider the following 424-residue polypeptide: Tyrosine--tRNA ligase (424 aa).

Tyr-37 is a binding site for L-tyrosine. A 'HIGH' region motif is present at residues 42 to 51 (PTADSLHLGH). L-tyrosine-binding residues include Tyr-175 and Gln-179. A 'KMSKS' region motif is present at residues 235–239 (KFGKT). Residue Lys-238 participates in ATP binding. The region spanning 357–414 (ADLQQALVNAELVPSRGQARTMISSNAVAINGEKQSDPEYAFTDADRLFGRYTLLRRG) is the S4 RNA-binding domain.

Belongs to the class-I aminoacyl-tRNA synthetase family. TyrS type 1 subfamily. Homodimer.

The protein localises to the cytoplasm. It catalyses the reaction tRNA(Tyr) + L-tyrosine + ATP = L-tyrosyl-tRNA(Tyr) + AMP + diphosphate + H(+). Catalyzes the attachment of tyrosine to tRNA(Tyr) in a two-step reaction: tyrosine is first activated by ATP to form Tyr-AMP and then transferred to the acceptor end of tRNA(Tyr). This is Tyrosine--tRNA ligase from Yersinia enterocolitica serotype O:8 / biotype 1B (strain NCTC 13174 / 8081).